The following is a 295-amino-acid chain: Nucleotide-binding protein PEPE_0450 (295 aa).

12–19 provides a ligand contact to ATP; it reads GMSGAGKT. Residue 62-65 participates in GTP binding; the sequence is DLRS.

The protein belongs to the RapZ-like family.

Displays ATPase and GTPase activities. This Pediococcus pentosaceus (strain ATCC 25745 / CCUG 21536 / LMG 10740 / 183-1w) protein is Nucleotide-binding protein PEPE_0450.